The sequence spans 388 residues: Succinyl-diaminopimelate desuccinylase (388 aa).

H72 is a Zn(2+) binding site. D74 is an active-site residue. D105 is a binding site for Zn(2+). Catalysis depends on E139, which acts as the Proton acceptor. Residues E140, E168, and H353 each contribute to the Zn(2+) site.

It belongs to the peptidase M20A family. DapE subfamily. In terms of assembly, homodimer. The cofactor is Zn(2+). Co(2+) serves as cofactor.

The enzyme catalyses N-succinyl-(2S,6S)-2,6-diaminopimelate + H2O = (2S,6S)-2,6-diaminopimelate + succinate. It participates in amino-acid biosynthesis; L-lysine biosynthesis via DAP pathway; LL-2,6-diaminopimelate from (S)-tetrahydrodipicolinate (succinylase route): step 3/3. Its function is as follows. Catalyzes the hydrolysis of N-succinyl-L,L-diaminopimelic acid (SDAP), forming succinate and LL-2,6-diaminopimelate (DAP), an intermediate involved in the bacterial biosynthesis of lysine and meso-diaminopimelic acid, an essential component of bacterial cell walls. This chain is Succinyl-diaminopimelate desuccinylase, found in Orientia tsutsugamushi (strain Ikeda) (Rickettsia tsutsugamushi).